The following is a 196-amino-acid chain: MMPFSREERQFVYTWLSNMLGHELSASQLAQYQQGLFDDFFAFLTEQGFQAQVEGIQQQLQQLKTVELAHLELAADYTQLFLLDGSSSALPYASVYLPEAQLTCHFTFLEALLVRFQLQLNRDKPEPSDHLCVYLELLRQLAEVDDMKTYRQLIQDALLPWLLPFNDKVQRVKTRTTFYQQVVVLLILLLQADCQN.

Belongs to the TorD/DmsD family. TorD subfamily.

The protein localises to the cytoplasm. Involved in the biogenesis of TorA. Acts on TorA before the insertion of the molybdenum cofactor and, as a result, probably favors a conformation of the apoenzyme that is competent for acquiring the cofactor. In Pasteurella multocida (strain Pm70), this protein is Chaperone protein TorD.